Reading from the N-terminus, the 500-residue chain is Ent-kaurene oxidase P450-4 (500 aa).

A helical transmembrane segment spans residues 6–26; it reads VHWLIYVAFGAWLCSYVIHVL. The N-linked (GlcNAc...) asparagine glycan is linked to Asn-240. Cys-441 contacts heme. Asn-475 is a glycosylation site (N-linked (GlcNAc...) asparagine).

This sequence belongs to the cytochrome P450 family. Heme is required as a cofactor.

The protein localises to the membrane. It catalyses the reaction ent-kaur-16-ene + 3 reduced [NADPH--hemoprotein reductase] + 3 O2 = ent-kaur-16-en-19-oate + 3 oxidized [NADPH--hemoprotein reductase] + 4 H2O + 4 H(+). Its pathway is plant hormone biosynthesis; gibberellin biosynthesis. Functionally, ent-kaurene oxidase; part of the gene cluster that mediates the biosynthesis of gibberellins (GAs), diterpenoids that may provide a selective advantage during infection of the preferred host plant, rice. Gibberellins (GAs) are diterpenoids and are synthesized via the mevalonate pathway. Biosynthesis of the major metabolite GA3 (gibberellic acid) from geranylgeranyl diphosphate (GGPP) requires 13 steps. The GGPP produced by the geranylgeranyl diphosphate synthase GGS2 is converted to ent-kaurene via ent-copalyldiphosphate in a two-step cyclization reaction performed by the bifunctional ent-copalyl diphosphate synthase/ent-kaurene synthase enzyme (CPS/KS). Ent-Kaurene is metabolized to GAs by a series of oxidation reactions catalyzed by cytochrome P450 monooxygenases. Cytochrome P450 monooxygenase P450-4 is an ent-kaurene oxidase that catalyzes the three oxidation steps between ent-kaurene and ent-kaurenoic acid. The highly multifunctional cytochrome P450 monooxygenase P450-1 then catalyzes four steps involving oxidation at two carbon atoms, in the main pathway from ent-kaurenoic acid to GA14 via GA12-aldehyde as well as producing kaurenolides and fujenoic acids as by-products. The cytochrome P450 monooxygenase P450-2 then converts GA14 to GA4 by removal of C-20. GA4 is further converted to GA7 by the GA4 desaturase DES via 1,2-desaturation before cytochrome P450 monooxygenase P450-3, a 13-hydroxylase, hydroxylates GA7 to GA3, the final product of the GA-biosynthetic pathway. This is Ent-kaurene oxidase P450-4 from Gibberella fujikuroi (strain CBS 195.34 / IMI 58289 / NRRL A-6831) (Bakanae and foot rot disease fungus).